The following is a 409-amino-acid chain: Elongation factor Tu, cyanelle (409 aa).

The tr-type G domain occupies 10 to 214 (KPHVNIGTIG…AVDEYIPTPE (205 aa)). The interval 19-26 (GHVDHGKT) is G1. 19 to 26 (GHVDHGKT) serves as a coordination point for GTP. Threonine 26 contributes to the Mg(2+) binding site. The interval 60–64 (GITIN) is G2. A G3 region spans residues 81–84 (DCPG). GTP contacts are provided by residues 81–85 (DCPGH) and 136–139 (NKED). The segment at 136–139 (NKED) is G4. A G5 region spans residues 174–176 (SAL).

Belongs to the TRAFAC class translation factor GTPase superfamily. Classic translation factor GTPase family. EF-Tu/EF-1A subfamily.

It is found in the plastid. Its subcellular location is the cyanelle. It catalyses the reaction GTP + H2O = GDP + phosphate + H(+). In terms of biological role, GTP hydrolase that promotes the GTP-dependent binding of aminoacyl-tRNA to the A-site of ribosomes during protein biosynthesis. This is Elongation factor Tu, cyanelle (tufA) from Cyanophora paradoxa.